A 386-amino-acid chain; its full sequence is Alanine racemase 1 (386 aa).

K38 acts as the Proton acceptor; specific for D-alanine in catalysis. K38 bears the N6-(pyridoxal phosphate)lysine mark. A substrate-binding site is contributed by R136. Y267 (proton acceptor; specific for L-alanine) is an active-site residue. Substrate is bound at residue M315.

It belongs to the alanine racemase family. Pyridoxal 5'-phosphate is required as a cofactor.

The enzyme catalyses L-alanine = D-alanine. It participates in amino-acid biosynthesis; D-alanine biosynthesis; D-alanine from L-alanine: step 1/1. Its function is as follows. Catalyzes the interconversion of L-alanine and D-alanine. May also act on other amino acids. This chain is Alanine racemase 1 (alr1), found in Clostridium acetobutylicum (strain ATCC 824 / DSM 792 / JCM 1419 / IAM 19013 / LMG 5710 / NBRC 13948 / NRRL B-527 / VKM B-1787 / 2291 / W).